The sequence spans 1779 residues: Collagen alpha-1(IV) chain (1779 aa).

Positions 1–23 are cleaved as a signal peptide; the sequence is MLPFWKRLLYAAVIAGALVGADA. Asparagine 72 is a glycosylation site (N-linked (GlcNAc...) asparagine). Disordered stretches follow at residues 89 to 643, 655 to 1187, 1200 to 1285, and 1336 to 1530; these read GNRG…KPAL, DKGY…LPGL, TGAP…IGPR, and GLPG…RGYE. The span at 144–163 shows a compositional bias: low complexity; sequence QAGVPGVQGPAGNPGAPGIN. Composition is skewed to basic and acidic residues over residues 196 to 217 and 249 to 259; these read KGEKGEPAKENGDYAKGEKGEP and PRGEHGLKGEK. Residues 360–369 show a composition bias toward low complexity; sequence PGLNGLPGNP. The span at 434 to 443 shows a compositional bias: gly residues; it reads GQKGGAGLPG. Low complexity predominate over residues 531 to 545; sequence GRPGTPGAAGAPGQK. Residues 724–747 show a composition bias toward basic and acidic residues; the sequence is PGFHGRDGAKGDKGSFGRSGEKGE. Composition is skewed to low complexity over residues 913–931 and 1015–1036; these read VGPIGPAGVAGPPGVPGID and PGLMGIKGDQGLAGAPGQQGLD. Positions 1106 to 1127 are enriched in basic and acidic residues; the sequence is EKGDQGRSGIDGRDGINGEKGE. Over residues 1151-1170 the composition is skewed to low complexity; it reads APGMDGLPGAAGAPGAVGYP. Composition is skewed to basic and acidic residues over residues 1224–1245, 1496–1505, and 1517–1529; these read IRGDKGSQGERGYTGEKGEQGE, ERGEKGERGL, and PKGDRGEPGERGY. The 224-residue stretch at 1555 to 1778 folds into the Collagen IV NC1 domain; the sequence is GILITRHSQS…SRCQVCMKNS (224 aa). 6 disulfides stabilise this stretch: cysteine 1570-cysteine 1659, cysteine 1603-cysteine 1656, cysteine 1615-cysteine 1621, cysteine 1678-cysteine 1774, cysteine 1712-cysteine 1771, and cysteine 1724-cysteine 1731.

This sequence belongs to the type IV collagen family. Trimers of two alpha 1(IV) and one alpha 2(IV) chain. Type IV collagen forms a mesh-like network linked through intermolecular interactions between 7S domains and between NC1 domains. Post-translationally, prolines at the third position of the tripeptide repeating unit (G-X-Y) are hydroxylated in some or all of the chains. Type IV collagens contain numerous cysteine residues which are involved in inter- and intramolecular disulfide bonding. 12 of these, located in the NC1 domain, are conserved in all known type IV collagens.

The protein resides in the secreted. The protein localises to the extracellular space. It localises to the extracellular matrix. It is found in the basement membrane. Collagen type IV is specific for basement membranes. This is Collagen alpha-1(IV) chain from Drosophila melanogaster (Fruit fly).